The sequence spans 99 residues: Nucleoid-associated protein SpyM3_1606 (99 aa).

The protein belongs to the YbaB/EbfC family. As to quaternary structure, homodimer.

It is found in the cytoplasm. The protein resides in the nucleoid. In terms of biological role, binds to DNA and alters its conformation. May be involved in regulation of gene expression, nucleoid organization and DNA protection. This chain is Nucleoid-associated protein SpyM3_1606, found in Streptococcus pyogenes serotype M3 (strain ATCC BAA-595 / MGAS315).